A 37-amino-acid chain; its full sequence is Beta-2-microglobulin (37 aa).

The Ig-like C1-type domain maps to 11 to 37 (GKEDVLICHVSNFHPPDITITLLKNGE).

Belongs to the beta-2-microglobulin family. Heterodimer of an alpha chain and a beta chain. Beta-2-microglobulin is the beta-chain of major histocompatibility complex class I molecules.

The protein localises to the secreted. In terms of biological role, component of the class I major histocompatibility complex (MHC). Involved in the presentation of peptide antigens to the immune system. This Oreochromis niloticus (Nile tilapia) protein is Beta-2-microglobulin (b2m).